A 131-amino-acid polypeptide reads, in one-letter code: uncharacterized protein (131 aa).

The CCHC-type; degenerate zinc finger occupies 64 to 81 (VNCDKCGKPGNVKNDCPG).

This is an uncharacterized protein from Homo sapiens (Human).